The following is a 238-amino-acid chain: Peptidyl-tRNA hydrolase (238 aa).

Residue tyrosine 14 coordinates tRNA. The active-site Proton acceptor is histidine 19. The tRNA site is built by phenylalanine 64, asparagine 66, and asparagine 112. Residues lysine 190–threonine 202 are compositionally biased toward basic and acidic residues. The segment at lysine 190–methionine 225 is disordered. The span at valine 203–arginine 212 shows a compositional bias: basic residues.

This sequence belongs to the PTH family. Monomer.

Its subcellular location is the cytoplasm. It carries out the reaction an N-acyl-L-alpha-aminoacyl-tRNA + H2O = an N-acyl-L-amino acid + a tRNA + H(+). In terms of biological role, hydrolyzes ribosome-free peptidyl-tRNAs (with 1 or more amino acids incorporated), which drop off the ribosome during protein synthesis, or as a result of ribosome stalling. Catalyzes the release of premature peptidyl moieties from peptidyl-tRNA molecules trapped in stalled 50S ribosomal subunits, and thus maintains levels of free tRNAs and 50S ribosomes. In Rhizobium rhizogenes (strain K84 / ATCC BAA-868) (Agrobacterium radiobacter), this protein is Peptidyl-tRNA hydrolase.